A 108-amino-acid polypeptide reads, in one-letter code: Large ribosomal subunit protein P1B (108 aa).

The span at 72–84 shows a compositional bias: low complexity; the sequence is AGSASGAAAGGEA. The tract at residues 72 to 108 is disordered; it reads AGSASGAAAGGEAAAEEAAEEEAAEESDDDMGFGLFD. Acidic residues predominate over residues 85-102; it reads AAEEAAEEEAAEESDDDM.

This sequence belongs to the eukaryotic ribosomal protein P1/P2 family. In terms of assembly, P1 and P2 exist as dimers at the large ribosomal subunit. Phosphorylated.

Its function is as follows. Plays an important role in the elongation step of protein synthesis. The chain is Large ribosomal subunit protein P1B (RPP1B) from Candida albicans (Yeast).